The chain runs to 227 residues: Cytochrome c oxidase subunit 2 (227 aa).

Topologically, residues 1 to 14 are mitochondrial intermembrane; it reads MAYPFQLGLQDATS. The chain crosses the membrane as a helical span at residues 15–45; that stretch reads PIMEELTNFHDHTLMIVFLISSLVLYIISLM. The Mitochondrial matrix portion of the chain corresponds to 46-59; that stretch reads LTTKLTHTSTMDAQ. A helical membrane pass occupies residues 60-87; it reads EVETIWTILPAAILVLIALPSLRILYMM. The Mitochondrial intermembrane portion of the chain corresponds to 88–227; the sequence is DEINNPALTV…YFENWSASMI (140 aa). Cu cation-binding residues include H161, C196, E198, C200, H204, and M207. Residue E198 coordinates Mg(2+). Y218 carries the post-translational modification Phosphotyrosine.

It belongs to the cytochrome c oxidase subunit 2 family. Component of the cytochrome c oxidase (complex IV, CIV), a multisubunit enzyme composed of 14 subunits. The complex is composed of a catalytic core of 3 subunits MT-CO1, MT-CO2 and MT-CO3, encoded in the mitochondrial DNA, and 11 supernumerary subunits COX4I, COX5A, COX5B, COX6A, COX6B, COX6C, COX7A, COX7B, COX7C, COX8 and NDUFA4, which are encoded in the nuclear genome. The complex exists as a monomer or a dimer and forms supercomplexes (SCs) in the inner mitochondrial membrane with NADH-ubiquinone oxidoreductase (complex I, CI) and ubiquinol-cytochrome c oxidoreductase (cytochrome b-c1 complex, complex III, CIII), resulting in different assemblies (supercomplex SCI(1)III(2)IV(1) and megacomplex MCI(2)III(2)IV(2)). Found in a complex with TMEM177, COA6, COX18, COX20, SCO1 and SCO2. Interacts with TMEM177 in a COX20-dependent manner. Interacts with COX20. Interacts with COX16. It depends on Cu cation as a cofactor.

It is found in the mitochondrion inner membrane. It catalyses the reaction 4 Fe(II)-[cytochrome c] + O2 + 8 H(+)(in) = 4 Fe(III)-[cytochrome c] + 2 H2O + 4 H(+)(out). In terms of biological role, component of the cytochrome c oxidase, the last enzyme in the mitochondrial electron transport chain which drives oxidative phosphorylation. The respiratory chain contains 3 multisubunit complexes succinate dehydrogenase (complex II, CII), ubiquinol-cytochrome c oxidoreductase (cytochrome b-c1 complex, complex III, CIII) and cytochrome c oxidase (complex IV, CIV), that cooperate to transfer electrons derived from NADH and succinate to molecular oxygen, creating an electrochemical gradient over the inner membrane that drives transmembrane transport and the ATP synthase. Cytochrome c oxidase is the component of the respiratory chain that catalyzes the reduction of oxygen to water. Electrons originating from reduced cytochrome c in the intermembrane space (IMS) are transferred via the dinuclear copper A center (CU(A)) of subunit 2 and heme A of subunit 1 to the active site in subunit 1, a binuclear center (BNC) formed by heme A3 and copper B (CU(B)). The BNC reduces molecular oxygen to 2 water molecules using 4 electrons from cytochrome c in the IMS and 4 protons from the mitochondrial matrix. The sequence is that of Cytochrome c oxidase subunit 2 (MT-CO2) from Rhabdomys pumilio (Four-striped grass mouse).